The chain runs to 329 residues: Ketol-acid reductoisomerase (NADP(+)) (329 aa).

One can recognise a KARI N-terminal Rossmann domain in the interval Thr-2–Thr-182. NADP(+) is bound by residues Tyr-25–Gln-28, Ser-51, Ser-53, and Asp-83–Gln-86. The active site involves His-108. Residue Gly-134 coordinates NADP(+). The region spanning Asn-183 to Leu-328 is the KARI C-terminal knotted domain. Positions 191, 195, 227, and 231 each coordinate Mg(2+). Ser-252 contacts substrate.

Belongs to the ketol-acid reductoisomerase family. Requires Mg(2+) as cofactor.

It carries out the reaction (2R)-2,3-dihydroxy-3-methylbutanoate + NADP(+) = (2S)-2-acetolactate + NADPH + H(+). The catalysed reaction is (2R,3R)-2,3-dihydroxy-3-methylpentanoate + NADP(+) = (S)-2-ethyl-2-hydroxy-3-oxobutanoate + NADPH + H(+). Its pathway is amino-acid biosynthesis; L-isoleucine biosynthesis; L-isoleucine from 2-oxobutanoate: step 2/4. It participates in amino-acid biosynthesis; L-valine biosynthesis; L-valine from pyruvate: step 2/4. Its function is as follows. Involved in the biosynthesis of branched-chain amino acids (BCAA). Catalyzes an alkyl-migration followed by a ketol-acid reduction of (S)-2-acetolactate (S2AL) to yield (R)-2,3-dihydroxy-isovalerate. In the isomerase reaction, S2AL is rearranged via a Mg-dependent methyl migration to produce 3-hydroxy-3-methyl-2-ketobutyrate (HMKB). In the reductase reaction, this 2-ketoacid undergoes a metal-dependent reduction by NADPH to yield (R)-2,3-dihydroxy-isovalerate. This Prochlorococcus marinus (strain MIT 9301) protein is Ketol-acid reductoisomerase (NADP(+)).